The sequence spans 749 residues: Small G protein signaling modulator 3 (749 aa).

Positions 114–305 (GIPHGMRPQL…RIWDLFFYEG (192 aa)) constitute a Rab-GAP TBC domain. S406 is subject to Phosphoserine. The stretch at 415–439 (EDDLEALKAKNIKQTELVADLREAI) forms a coiled coil. Residues 480–539 (SHRRRAKALLDFERHDDDELGFRKNDIITIVSQKDEHCWVGELNGLRGWFPAKFVEVLDE) enclose the SH3 domain. The 164-residue stretch at 555-718 (GVTDLVRGTL…FAFSLSQDWE (164 aa)) folds into the RUN domain.

The protein belongs to the small G protein signaling modulator family. As to quaternary structure, interacts with GJA1. Interaction with GJA1 induces its degradation. Interacts via its RUN domain with the C-terminal region of NF2. Interacts with RAB3A, RAB4A, RAB5A, RAB8A, RAB11A, RAP1A, RAP1B, RAP2A, RAP2B and PDCD6IP. No interaction with RAB27A. Widely expressed.

Its subcellular location is the cytoplasm. Its function is as follows. May play a cooperative role in NF2-mediated growth suppression of cells. The sequence is that of Small G protein signaling modulator 3 from Homo sapiens (Human).